Here is a 771-residue protein sequence, read N- to C-terminus: Protein lin-54 homolog (771 aa).

Disordered regions lie at residues 21–44 (AMDEDPPASHLTPPPQSAPESAQV) and 68–105 (TNAKSTTSSTTQLLLTPSSSSSTTTKNATPTLPKIPSL). Residues 72-92 (STTSSTTQLLLTPSSSSSTTT) are compositionally biased toward low complexity. Residues S288, S292, and S308 each carry the phosphoserine modification. The CRC domain maps to 544–657 (PRKPCNCTRS…KCMGCKNFEE (114 aa)). Residues 546 to 559 (KPCNCTRSQCLKLY) are DNA-binding. Zn(2+) contacts are provided by C548, C550, C555, C560, C562, C569, C572, C574, and C577. The linker stretch occupies residues 606-619 (IGKGKEGESDRRHS). The Zn(2+) site is built by C622, C624, C629, C634, C636, C643, C647, C649, and C652. Residues 622–635 (CNCKKSGCLKNYCE) are DNA-binding.

The protein belongs to the lin-54 family. As to quaternary structure, component of the DREAM complex.

It localises to the nucleus. Component of the DREAM complex, a multiprotein complex that can both act as a transcription activator or repressor depending on the context. Specifically recognizes the consensus motif 5'-TTYRAA-3' in target DNA. This is Protein lin-54 homolog (lin54) from Danio rerio (Zebrafish).